Here is a 543-residue protein sequence, read N- to C-terminus: Protein male-specific lethal-3 (543 aa).

Residues 10–90 (LFNRGEKVLC…KLQRELAEAA (81 aa)) enclose the Chromo domain. Residues 93–247 (QKTGGYSYKD…THTTDAEKRI (155 aa)) form a disordered region. Basic and acidic residues-rich tracts occupy residues 180-202 (RSRD…DNSS), 210-224 (KSKG…ERRS), and 234-247 (SPKD…EKRI). The 294-residue stretch at 249-542 (QEDRVMLRIS…PLIDQGRELS (294 aa)) folds into the MRG domain.

In terms of assembly, component of the male-specific lethal (MSL) histone acetyltransferase complex, composed of mof, mle, msl-1, msl-2 and msl-3 proteins, as well as roX1 and roX2 non-coding RNAs. Ubiquitinated by msl-2.

It is found in the nucleus. It localises to the chromosome. Component of the male-specific lethal (MSL) histone acetyltransferase complex, a multiprotein complex essential for elevating transcription of the single X chromosome in the male (X chromosome dosage compensation). The MSL complex specifically associates with the single X chromosome in males and mediates formation of H4K16ac, promoting a two-fold activation of X chromosome. Acts as a histone reader that specifically recognizes and binds histone H3 trimethylated at 'Lys-36' (H3K36me3) and histone H4 monomethylated at 'Lys-20' (H4K20me1). Within the MSL complex, mediates the spreading of the MSL complex from initiation sites on the male X chromosome to flanking chromatin. Following initial recruitment of the MSL complex to male X chromosome by msl-2, msl-3 binds H3K36me3 and promotes spreading of the MSL complex in cis. In addition to its role in dosage compensation in males, promotes germline stem cell differentiation in females: recognizes and binds H3K36me3, promoting recruitment of the ATAC complex and transcription of genes, such as RpS19b. This is Protein male-specific lethal-3 (msl-3) from Drosophila virilis (Fruit fly).